The chain runs to 235 residues: 15,16-dihydrobiliverdin:ferredoxin oxidoreductase (235 aa).

It belongs to the HY2 family.

The catalysed reaction is 15,16-dihydrobiliverdin + oxidized 2[4Fe-4S]-[ferredoxin] = biliverdin IXalpha + reduced 2[4Fe-4S]-[ferredoxin] + 2 H(+). Catalyzes the two-electron reduction of biliverdin IX-alpha at the C15 methine bridge. This Parasynechococcus marenigrum (strain WH8102) protein is 15,16-dihydrobiliverdin:ferredoxin oxidoreductase (pebA).